We begin with the raw amino-acid sequence, 479 residues long: Catalase easC (479 aa).

The span at 1 to 13 (MASQVSLTAQGSG) shows a compositional bias: polar residues. The interval 1 to 28 (MASQVSLTAQGSGLSAPLNGPEHLTSTT) is disordered. His53 is a catalytic residue. Tyr343 is a binding site for heme. The tract at residues 365 to 385 (HAANDAPKTKKPAVPLQKQSR) is disordered.

The protein belongs to the catalase family. Requires heme as cofactor.

Its pathway is alkaloid biosynthesis; ergot alkaloid biosynthesis. Its function is as follows. Catalase; part of the gene cluster that mediates the biosynthesis of fungal ergot alkaloid. DmaW catalyzes the first step of ergot alkaloid biosynthesis by condensing dimethylallyl diphosphate (DMAP) and tryptophan to form 4-dimethylallyl-L-tryptophan. The second step is catalyzed by the methyltransferase easF that methylates 4-dimethylallyl-L-tryptophan in the presence of S-adenosyl-L-methionine, resulting in the formation of 4-dimethylallyl-L-abrine. The catalase easC and the FAD-dependent oxidoreductase easE then transform 4-dimethylallyl-L-abrine to chanoclavine-I which is further oxidized by easD in the presence of NAD(+), resulting in the formation of chanoclavine-I aldehyde. Agroclavine dehydrogenase easG then mediates the conversion of chanoclavine-I aldehyde to agroclavine via a non-enzymatic adduct reaction: the substrate is an iminium intermediate that is formed spontaneously from chanoclavine-I aldehyde in the presence of glutathione. Further conversion of agroclavine to paspalic acid is a two-step process involving oxidation of agroclavine to elymoclavine and of elymoclavine to paspalic acid, the second step being performed by the elymoclavine oxidase cloA. However, cloA does not encode a functional enzyme indicating that C.fusiformis terminates its ergot alkaloid pathway at elymoclavine. The protein is Catalase easC of Claviceps fusiformis (Ergot fungus).